A 388-amino-acid polypeptide reads, in one-letter code: Succinate--CoA ligase [ADP-forming] subunit beta (388 aa).

In terms of domain architecture, ATP-grasp spans Lys-9 to Glu-244. Residues Lys-46, Gly-53 to Gly-55, Glu-99, Ala-102, and Glu-107 contribute to the ATP site. Residues Asn-199 and Asp-213 each contribute to the Mg(2+) site. Substrate contacts are provided by residues Asn-264 and Gly-321 to Met-323.

The protein belongs to the succinate/malate CoA ligase beta subunit family. In terms of assembly, heterotetramer of two alpha and two beta subunits. Mg(2+) is required as a cofactor.

The catalysed reaction is succinate + ATP + CoA = succinyl-CoA + ADP + phosphate. It catalyses the reaction GTP + succinate + CoA = succinyl-CoA + GDP + phosphate. The protein operates within carbohydrate metabolism; tricarboxylic acid cycle; succinate from succinyl-CoA (ligase route): step 1/1. Functionally, succinyl-CoA synthetase functions in the citric acid cycle (TCA), coupling the hydrolysis of succinyl-CoA to the synthesis of either ATP or GTP and thus represents the only step of substrate-level phosphorylation in the TCA. The beta subunit provides nucleotide specificity of the enzyme and binds the substrate succinate, while the binding sites for coenzyme A and phosphate are found in the alpha subunit. The protein is Succinate--CoA ligase [ADP-forming] subunit beta of Herminiimonas arsenicoxydans.